The following is a 179-amino-acid chain: Large ribosomal subunit protein uL6 (179 aa).

This sequence belongs to the universal ribosomal protein uL6 family. In terms of assembly, part of the 50S ribosomal subunit.

Its function is as follows. This protein binds to the 23S rRNA, and is important in its secondary structure. It is located near the subunit interface in the base of the L7/L12 stalk, and near the tRNA binding site of the peptidyltransferase center. This Solidesulfovibrio magneticus (strain ATCC 700980 / DSM 13731 / RS-1) (Desulfovibrio magneticus) protein is Large ribosomal subunit protein uL6.